We begin with the raw amino-acid sequence, 65 residues long: Large ribosomal subunit protein bL33c (65 aa).

This sequence belongs to the bacterial ribosomal protein bL33 family.

It localises to the plastid. Its subcellular location is the chloroplast. The polypeptide is Large ribosomal subunit protein bL33c (rpl33) (Porphyra purpurea (Red seaweed)).